The following is a 288-amino-acid chain: ATP synthase gamma chain (288 aa).

Belongs to the ATPase gamma chain family. F-type ATPases have 2 components, CF(1) - the catalytic core - and CF(0) - the membrane proton channel. CF(1) has five subunits: alpha(3), beta(3), gamma(1), delta(1), epsilon(1). CF(0) has three main subunits: a, b and c.

It is found in the cell inner membrane. Its function is as follows. Produces ATP from ADP in the presence of a proton gradient across the membrane. The gamma chain is believed to be important in regulating ATPase activity and the flow of protons through the CF(0) complex. This Aeromonas hydrophila subsp. hydrophila (strain ATCC 7966 / DSM 30187 / BCRC 13018 / CCUG 14551 / JCM 1027 / KCTC 2358 / NCIMB 9240 / NCTC 8049) protein is ATP synthase gamma chain.